The sequence spans 180 residues: Regulator of G-protein signaling 8 (180 aa).

The residue at position 26 (serine 26) is a Phosphoserine. Residues 56-171 (SFDVLLSHKY…FLRSKMYLDL (116 aa)) form the RGS domain.

Interacts with GNAO1 and GNAI3. As to expression, expressed at high levels in brain. Very little expression detected in other tissues. Detected in Purkinje cells in the cerebellum.

It is found in the cell membrane. Its subcellular location is the membrane. It localises to the perikaryon. The protein resides in the cell projection. The protein localises to the dendrite. It is found in the nucleus. In terms of biological role, regulates G protein-coupled receptor signaling cascades, including signaling via muscarinic acetylcholine receptor CHRM2 and dopamine receptor DRD2. Inhibits signal transduction by increasing the GTPase activity of G protein alpha subunits, thereby driving them into their inactive GDP-bound form. Modulates the activity of potassium channels that are activated in response to DRD2 and CHRM2 signaling. This chain is Regulator of G-protein signaling 8 (Rgs8), found in Rattus norvegicus (Rat).